Reading from the N-terminus, the 215-residue chain is Adenylate kinase (215 aa).

Residue 10 to 15 participates in ATP binding; it reads GAGKGT. Positions 30–59 are NMP; sequence STGDILRANVREGTELGLAAKEYMDKGELV. Residues threonine 31, arginine 36, 57–59, 85–88, and glutamine 92 each bind AMP; these read ELV and GYPR. Residues 126–162 form an LID region; that stretch reads GRLMCNCGASYHRTFNPPKKDDVCDICGGKVFQRADD. Residue arginine 127 coordinates ATP. Cysteine 130 and cysteine 132 together coordinate Zn(2+). Residue 135–136 coordinates ATP; that stretch reads SY. Zn(2+) contacts are provided by cysteine 149 and cysteine 152. Arginine 159 and arginine 170 together coordinate AMP. Lysine 198 contributes to the ATP binding site.

Belongs to the adenylate kinase family. Monomer.

It is found in the cytoplasm. It carries out the reaction AMP + ATP = 2 ADP. It functions in the pathway purine metabolism; AMP biosynthesis via salvage pathway; AMP from ADP: step 1/1. Its function is as follows. Catalyzes the reversible transfer of the terminal phosphate group between ATP and AMP. Plays an important role in cellular energy homeostasis and in adenine nucleotide metabolism. The polypeptide is Adenylate kinase (Methanosarcina barkeri (strain Fusaro / DSM 804)).